The chain runs to 273 residues: MYSANPTLGYYVPPLDVNNLTDQQTAISIEHLSLYYQQSRALSDISMRIPKGQVTAFIGPSGCGKSTLLRCINRMNDLVEGTRVEGEVKLHGKNIYHPDVDVPTLRRRVGMVFQRPNPFPKSIYENVVYGLRLQGIKNSRALDDAAEQSLRAAALWDEVKHRLHENAFGLSGGQQQRLVIARAIAIEPEVLLLDEPTSALDPISTLTIEELIHDLKTKYTVVIVTHNMQQAARVSDHTAFIHMGKLIEYADTDSIFTSPLKKQTEDYITGRYG.

Residues 27 to 268 (ISIEHLSLYY…PLKKQTEDYI (242 aa)) enclose the ABC transporter domain. Position 59–66 (59–66 (GPSGCGKS)) interacts with ATP.

Belongs to the ABC transporter superfamily. Phosphate importer (TC 3.A.1.7) family. The complex is composed of two ATP-binding proteins (PstB), two transmembrane proteins (PstC and PstA) and a solute-binding protein (PstS).

Its subcellular location is the cell inner membrane. It carries out the reaction phosphate(out) + ATP + H2O = ADP + 2 phosphate(in) + H(+). In terms of biological role, part of the ABC transporter complex PstSACB involved in phosphate import. Responsible for energy coupling to the transport system. The protein is Phosphate import ATP-binding protein PstB 1 of Vibrio cholerae serotype O1 (strain ATCC 39315 / El Tor Inaba N16961).